The sequence spans 843 residues: General transcription and DNA repair factor IIH helicase/translocase subunit XPB/SSL2 (843 aa).

Residues 1-85 are disordered; it reads MTDVEGYQPK…TAADSSMNQM (85 aa). Residues 26 to 41 are compositionally biased toward acidic residues; that stretch reads SDEDSPATDAEIDENY. A compositionally biased stretch (basic and acidic residues) spans 42 to 56; sequence DDNRETSEGRGERDT. Basic residues predominate over residues 64–74; it reads KKPRKKTKSSR. The Nuclear localization signal signature appears at 64–75; that stretch reads KKPRKKTKSSRH. Positions 373 to 535 constitute a Helicase ATP-binding domain; the sequence is MFGNGRARSG…DLNFLIGPKL (163 aa). 386-393 lines the ATP pocket; that stretch reads LPCGAGKT. The short motif at 488–491 is the DEAH box element; the sequence is DEVH. The 155-residue stretch at 589–743 folds into the Helicase C-terminal domain; sequence QACQFLIQYH…KVITHLHGME (155 aa). Serine 752 bears the Phosphoserine mark.

Belongs to the helicase family. RAD25/XPB subfamily. As to quaternary structure, component of the 7-subunit TFIIH core complex composed of XPB/SSL2, XPD/RAD3, SSL1, TFB1, TFB2, TFB4 and TFB5, which is active in NER. The core complex associates with the 3-subunit CTD-kinase module TFIIK composed of CCL1, KIN28 and TFB3 to form the 10-subunit holoenzyme (holo-TFIIH) active in transcription. An additionnal subunit, TFB6, plays a role in the dissociation of the SSL2 helicase from TFIIH after transcription initiation. Interacts directly with TFB6. The cofactor is Mg(2+).

It is found in the nucleus. The catalysed reaction is Couples ATP hydrolysis with the unwinding of duplex DNA by translocating in the 3'-5' direction.. It carries out the reaction ATP + H2O = ADP + phosphate + H(+). ATP-dependent DNA translocase. Component of the general transcription and DNA repair factor IIH (TFIIH) core complex. When complexed to CDK-activating kinase (CAK), involved in RNA transcription by RNA polymerase II. May have 3'-5' helicase activity alone, the TFIIH core however has no 3'-5' helicase activity. Also involved in transcription-coupled nucleotide excision repair (NER) of damaged DNA. In NER, TFIIH acts by opening DNA around the lesion to allow the excision of the damaged oligonucleotide and its replacement by a new DNA fragment. The ATPase activity of XPB/SSL2, but not its helicase activity, is required for DNA opening. In transcription, TFIIH has an essential role in transcription initiation. When the pre-initiation complex (PIC) has been established, TFIIH is required for promoter opening and promoter escape. The ATP-dependent helicase activity of XPB/SSL2 is required for promoter opening and promoter escape. XPB/SSL2 acts as a double-stranded DNA translocase, promoting DNA opening by tracking in a 5'-3' dirction along the nontemplate promoter strand, rotating and inserting DNA into the Pol II active site cleft, leading to DNA unwinding. A dsDNA-stimulated ATPase, dATP and ATP are equally good substrates. May also use this translocase mechanism during DNA repair rather than physically wedging open damaged DNA. This is General transcription and DNA repair factor IIH helicase/translocase subunit XPB/SSL2 from Saccharomyces cerevisiae (strain ATCC 204508 / S288c) (Baker's yeast).